A 292-amino-acid polypeptide reads, in one-letter code: Diaminopimelate epimerase (292 aa).

3 residues coordinate substrate: Asn13, Gln46, and Asn66. Cys75 functions as the Proton donor in the catalytic mechanism. Residues 76 to 77, Asn170, Asn203, and 221 to 222 each bind substrate; these read GN and ER. The active-site Proton acceptor is Cys230. 231 to 232 lines the substrate pocket; it reads GT.

Belongs to the diaminopimelate epimerase family. Homodimer.

It localises to the cytoplasm. It catalyses the reaction (2S,6S)-2,6-diaminopimelate = meso-2,6-diaminopimelate. Its pathway is amino-acid biosynthesis; L-lysine biosynthesis via DAP pathway; DL-2,6-diaminopimelate from LL-2,6-diaminopimelate: step 1/1. Catalyzes the stereoinversion of LL-2,6-diaminopimelate (L,L-DAP) to meso-diaminopimelate (meso-DAP), a precursor of L-lysine and an essential component of the bacterial peptidoglycan. In Acidovorax ebreus (strain TPSY) (Diaphorobacter sp. (strain TPSY)), this protein is Diaminopimelate epimerase.